Reading from the N-terminus, the 170-residue chain is Adenine phosphoribosyltransferase (170 aa).

This sequence belongs to the purine/pyrimidine phosphoribosyltransferase family. Homodimer.

The protein localises to the cytoplasm. It carries out the reaction AMP + diphosphate = 5-phospho-alpha-D-ribose 1-diphosphate + adenine. The protein operates within purine metabolism; AMP biosynthesis via salvage pathway; AMP from adenine: step 1/1. Functionally, catalyzes a salvage reaction resulting in the formation of AMP, that is energically less costly than de novo synthesis. This chain is Adenine phosphoribosyltransferase, found in Acaryochloris marina (strain MBIC 11017).